A 213-amino-acid polypeptide reads, in one-letter code: Histidine biosynthesis bifunctional protein HisIE (213 aa).

The tract at residues 1–114 is phosphoribosyl-AMP cyclohydrolase; sequence MLTTEKYQGL…FHPALTDFSF (114 aa). Positions 115-213 are phosphoribosyl-ATP pyrophosphohydrolase; the sequence is LFQLENIISI…RVRSKLKKKH (99 aa).

The protein in the N-terminal section; belongs to the PRA-CH family. In the C-terminal section; belongs to the PRA-PH family.

Its subcellular location is the cytoplasm. It carries out the reaction 1-(5-phospho-beta-D-ribosyl)-ATP + H2O = 1-(5-phospho-beta-D-ribosyl)-5'-AMP + diphosphate + H(+). The enzyme catalyses 1-(5-phospho-beta-D-ribosyl)-5'-AMP + H2O = 1-(5-phospho-beta-D-ribosyl)-5-[(5-phospho-beta-D-ribosylamino)methylideneamino]imidazole-4-carboxamide. Its pathway is amino-acid biosynthesis; L-histidine biosynthesis; L-histidine from 5-phospho-alpha-D-ribose 1-diphosphate: step 2/9. It functions in the pathway amino-acid biosynthesis; L-histidine biosynthesis; L-histidine from 5-phospho-alpha-D-ribose 1-diphosphate: step 3/9. The sequence is that of Histidine biosynthesis bifunctional protein HisIE from Blochmanniella floridana.